Reading from the N-terminus, the 109-residue chain is uncharacterized protein (109 aa).

Residues 77–98 (TRTGHAYPRFTRPSFPSCNRNG) form a disordered region.

This is an uncharacterized protein from Homo sapiens (Human).